Here is a 315-residue protein sequence, read N- to C-terminus: Putative pyruvate, phosphate dikinase regulatory protein (315 aa).

The tract at residues 1–32 is disordered; sequence MGPFGARASPEAGQVVKQPLTDDPQESLAQGE. 189–196 contacts ADP; it reads GVSRTSKT.

Belongs to the pyruvate, phosphate/water dikinase regulatory protein family. PDRP subfamily.

It carries out the reaction N(tele)-phospho-L-histidyl/L-threonyl-[pyruvate, phosphate dikinase] + ADP = N(tele)-phospho-L-histidyl/O-phospho-L-threonyl-[pyruvate, phosphate dikinase] + AMP + H(+). It catalyses the reaction N(tele)-phospho-L-histidyl/O-phospho-L-threonyl-[pyruvate, phosphate dikinase] + phosphate + H(+) = N(tele)-phospho-L-histidyl/L-threonyl-[pyruvate, phosphate dikinase] + diphosphate. Functionally, bifunctional serine/threonine kinase and phosphorylase involved in the regulation of the pyruvate, phosphate dikinase (PPDK) by catalyzing its phosphorylation/dephosphorylation. This is Putative pyruvate, phosphate dikinase regulatory protein from Caulobacter vibrioides (strain ATCC 19089 / CIP 103742 / CB 15) (Caulobacter crescentus).